Consider the following 125-residue polypeptide: Small ribosomal subunit protein eS6 (125 aa).

Belongs to the eukaryotic ribosomal protein eS6 family.

In Pyrococcus abyssi (strain GE5 / Orsay), this protein is Small ribosomal subunit protein eS6.